The sequence spans 348 residues: Large ribosomal subunit protein uL3m (348 aa).

A mitochondrion-targeting transit peptide spans 1–40 (MPGWRLLTQVGAQVLGRLGDGLGAALGPGNRTHIWLFVRG).

This sequence belongs to the universal ribosomal protein uL3 family. As to quaternary structure, component of the mitochondrial large ribosomal subunit (mt-LSU). Mature mammalian 55S mitochondrial ribosomes consist of a small (28S) and a large (39S) subunit. The 28S small subunit contains a 12S ribosomal RNA (12S mt-rRNA) and 30 different proteins. The 39S large subunit contains a 16S rRNA (16S mt-rRNA), a copy of mitochondrial valine transfer RNA (mt-tRNA(Val)), which plays an integral structural role, and 52 different proteins.

It is found in the mitochondrion. The protein is Large ribosomal subunit protein uL3m (MRPL3) of Homo sapiens (Human).